Here is a 355-residue protein sequence, read N- to C-terminus: RNA binding protein fox-1 homolog 1 (355 aa).

Positions 1–123 are disordered; the sequence is MNCEREQLRG…QPKRLHVSNI (123 aa). Residues 70–112 are compositionally biased toward polar residues; sequence QSHSEQSAADTSAHTVSGTATTDDSAPTDGQPQTQPSENTENK. In terms of domain architecture, RRM spans 116–174; sequence KRLHVSNIPFRFRDPDLRQMFGGFGFVTFENSADADRAREKLHGTVVEGRKIEVNNATA. Arg-298 bears the Asymmetric dimethylarginine mark.

Binds to the C-terminus of ATXN2.

It is found in the nucleus. The protein resides in the cytoplasm. In terms of biological role, RNA-binding protein that regulates alternative splicing events by binding to 5'-UGCAUGU-3' elements. Prevents binding of U2AF2 to the 3'-splice site. Regulates alternative splicing of tissue-specific exons and of differentially spliced exons during erythropoiesis. This is RNA binding protein fox-1 homolog 1 (RBFOX1) from Bos taurus (Bovine).